The sequence spans 339 residues: Ketol-acid reductoisomerase (NADP(+)) (339 aa).

One can recognise a KARI N-terminal Rossmann domain in the interval 1-182; the sequence is MRVYYDRDAD…GGGRAGVIET (182 aa). NADP(+)-binding positions include 24 to 27, arginine 48, serine 51, threonine 53, and 83 to 86; these read YGSQ and DELQ. Histidine 108 is a catalytic residue. Glycine 134 contacts NADP(+). The KARI C-terminal knotted domain occupies 183 to 328; that stretch reads TFKEECETDL…EKLRAMMPWI (146 aa). The Mg(2+) site is built by aspartate 191, glutamate 195, glutamate 227, and glutamate 231. Serine 252 contributes to the substrate binding site.

It belongs to the ketol-acid reductoisomerase family. Mg(2+) serves as cofactor.

The catalysed reaction is (2R)-2,3-dihydroxy-3-methylbutanoate + NADP(+) = (2S)-2-acetolactate + NADPH + H(+). It carries out the reaction (2R,3R)-2,3-dihydroxy-3-methylpentanoate + NADP(+) = (S)-2-ethyl-2-hydroxy-3-oxobutanoate + NADPH + H(+). Its pathway is amino-acid biosynthesis; L-isoleucine biosynthesis; L-isoleucine from 2-oxobutanoate: step 2/4. It functions in the pathway amino-acid biosynthesis; L-valine biosynthesis; L-valine from pyruvate: step 2/4. In terms of biological role, involved in the biosynthesis of branched-chain amino acids (BCAA). Catalyzes an alkyl-migration followed by a ketol-acid reduction of (S)-2-acetolactate (S2AL) to yield (R)-2,3-dihydroxy-isovalerate. In the isomerase reaction, S2AL is rearranged via a Mg-dependent methyl migration to produce 3-hydroxy-3-methyl-2-ketobutyrate (HMKB). In the reductase reaction, this 2-ketoacid undergoes a metal-dependent reduction by NADPH to yield (R)-2,3-dihydroxy-isovalerate. This Xanthobacter autotrophicus (strain ATCC BAA-1158 / Py2) protein is Ketol-acid reductoisomerase (NADP(+)).